The chain runs to 354 residues: Protein RecA (354 aa).

An ATP-binding site is contributed by 67 to 74; that stretch reads GPESSGKT.

This sequence belongs to the RecA family.

It localises to the cytoplasm. Its function is as follows. Can catalyze the hydrolysis of ATP in the presence of single-stranded DNA, the ATP-dependent uptake of single-stranded DNA by duplex DNA, and the ATP-dependent hybridization of homologous single-stranded DNAs. It interacts with LexA causing its activation and leading to its autocatalytic cleavage. The sequence is that of Protein RecA from Pasteurella multocida (strain Pm70).